The following is a 328-amino-acid chain: Zinc chaperone YeiR (328 aa).

9-17 (GFLGSGKTT) contributes to the GTP binding site. Positions 63-66 (CMCC) match the CXCC motif motif. Aspartate 155 provides a ligand contact to GTP. The CobW C-terminal domain occupies 241–321 (CGWIFDADTV…WNALQSALLK (81 aa)).

This sequence belongs to the SIMIBI class G3E GTPase family. ZNG1 subfamily. Oligomerizes in the presence of Zn(2+).

It carries out the reaction GTP + H2O = GDP + phosphate + H(+). GTPase activity is enhanced by Zn(2+) binding. Zinc chaperone that directly transfers zinc cofactor to target proteins, thereby activating them. Zinc is transferred from the CXCC motif in the GTPase domain to the zinc binding site in target proteins in a process requiring GTP hydrolysis. This is Zinc chaperone YeiR (yeiR) from Escherichia coli (strain K12).